A 352-amino-acid chain; its full sequence is MRVAVDVMGGDNAPHVEVEGAVAAAREFGVPVTLVGDAEKVRAELARYDCKGLDIEVWHASEVVGMHDSASDAVRKKKDSSIRIAFELVKGGEAVAVVSAGNSGATMAAGMFVLKRMKGIDRAAIAQLFPTVSGKTLVLDVGGNVDCKPIHLVQFAVMGEVYARFVMGVDNPKVGLLSNGEEASKGNELTRETSALLREKPINYIGYVEGRDIFNGSVDVVVCDGFVGNVALKLSEGLAEAVGKMLKAEIKSSFLSQIGYLLSRKAFNNFKKTVDYAEYGGAPLLGINGVGMICHGGSNPKAIKNAIRFAHEYALKGVNGRMAEKLNESFPGDAREREGAPAPDAGTERVAS.

The span at 328 to 339 (ESFPGDAREREG) shows a compositional bias: basic and acidic residues. The tract at residues 328–352 (ESFPGDAREREGAPAPDAGTERVAS) is disordered.

The protein belongs to the PlsX family. In terms of assembly, homodimer. Probably interacts with PlsY.

It is found in the cytoplasm. The enzyme catalyses a fatty acyl-[ACP] + phosphate = an acyl phosphate + holo-[ACP]. The protein operates within lipid metabolism; phospholipid metabolism. Catalyzes the reversible formation of acyl-phosphate (acyl-PO(4)) from acyl-[acyl-carrier-protein] (acyl-ACP). This enzyme utilizes acyl-ACP as fatty acyl donor, but not acyl-CoA. This Citrifermentans bemidjiense (strain ATCC BAA-1014 / DSM 16622 / JCM 12645 / Bem) (Geobacter bemidjiensis) protein is Phosphate acyltransferase.